The following is a 138-amino-acid chain: Small ribosomal subunit protein uS11c (138 aa).

Positions 1–23 (MAKPIPRIGSRKNGRIGSRKSGR) are disordered. Residues 9–23 (GSRKNGRIGSRKSGR) are compositionally biased toward basic residues.

Belongs to the universal ribosomal protein uS11 family. In terms of assembly, part of the 30S ribosomal subunit.

Its subcellular location is the plastid. The protein resides in the chloroplast. This is Small ribosomal subunit protein uS11c from Buxus microphylla (Littleleaf boxwood).